The chain runs to 509 residues: Phytase A (509 aa).

A signal peptide spans 1 to 15; that stretch reads MFLLMVPLFSYLAAA. A disulfide bond links cysteine 27 and cysteine 36. Residues glutamine 46, tyrosine 47, arginine 75, histidine 76, arginine 79, threonine 82, and arginine 164 each contribute to the 1D-myo-inositol hexakisphosphate site. 4 disulfide bridges follow: cysteine 65–cysteine 444, cysteine 216–cysteine 507, cysteine 266–cysteine 295, and cysteine 478–cysteine 486. Histidine 76 (nucleophile) is an active-site residue. 2 N-linked (GlcNAc...) asparagine glycosylation sites follow: asparagine 171 and asparagine 208. 1D-myo-inositol hexakisphosphate is bound at residue lysine 314. N-linked (GlcNAc...) asparagine glycosylation is found at asparagine 348, asparagine 352, and asparagine 367. 1D-myo-inositol hexakisphosphate-binding residues include histidine 376 and aspartate 377. An N-linked (GlcNAc...) asparagine glycan is attached at asparagine 401.

This sequence belongs to the histidine acid phosphatase family. In terms of assembly, monomer.

It is found in the secreted. The enzyme catalyses 1D-myo-inositol hexakisphosphate + H2O = 1D-myo-inositol 1,2,4,5,6-pentakisphosphate + phosphate. It catalyses the reaction 1D-myo-inositol 1,2,4,5,6-pentakisphosphate + H2O = 1D-myo-inositol 1,2,5,6-tetrakisphosphate + phosphate. It carries out the reaction 1D-myo-inositol 1,2,5,6-tetrakisphosphate + H2O = 1D-myo-inositol 1,2,6-trisphosphate + phosphate. The catalysed reaction is 1D-myo-inositol 1,2,6-trisphosphate + H2O = 1D-myo-inositol 1,2-bisphosphate + phosphate. The enzyme catalyses 1D-myo-inositol 1,2-bisphosphate + H2O = 1D-myo-inositol 2-phosphate + phosphate. In terms of biological role, catalyzes the phosphate monoester hydrolysis of phytic acid (myo-inositol hexakisphosphate), which results in the stepwise formation of myo-inositol pentakis-, tetrakis-, tris-, bis-, and monophosphates, as well as the liberation of inorganic phosphate. Myo-inositol 2-monophosphate is the end product. Is also able to dephosphorylate the classic acid phosphatase substrate p-nitrophenyl phosphate. This is Phytase A (pht-1) from Neurospora crassa (strain ATCC 24698 / 74-OR23-1A / CBS 708.71 / DSM 1257 / FGSC 987).